Consider the following 207-residue polypeptide: Outer-membrane lipoprotein LolB (207 aa).

The N-terminal stretch at 1–21 (MPTKTVRCLRLLPLASLLLAA) is a signal peptide. Cys22 carries N-palmitoyl cysteine lipidation. Cys22 carries S-diacylglycerol cysteine lipidation.

This sequence belongs to the LolB family. In terms of assembly, monomer.

The protein resides in the cell outer membrane. In terms of biological role, plays a critical role in the incorporation of lipoproteins in the outer membrane after they are released by the LolA protein. This chain is Outer-membrane lipoprotein LolB, found in Pectobacterium atrosepticum (strain SCRI 1043 / ATCC BAA-672) (Erwinia carotovora subsp. atroseptica).